A 259-amino-acid chain; its full sequence is UPF0246 protein VSAL_I2547 (259 aa).

Belongs to the UPF0246 family.

The chain is UPF0246 protein VSAL_I2547 from Aliivibrio salmonicida (strain LFI1238) (Vibrio salmonicida (strain LFI1238)).